We begin with the raw amino-acid sequence, 154 residues long: Low molecular weight protein-tyrosine-phosphatase PtpA (154 aa).

Cys-8 (nucleophile) is an active-site residue. Arg-14 is a catalytic residue. Residue Asp-120 is the Proton donor of the active site.

The protein belongs to the low molecular weight phosphotyrosine protein phosphatase family. Interacts with host CORO1A. Post-translationally, phosphorylations at Tyr-122 and Tyr-123 are essential for phosphatase activity.

The protein resides in the secreted. The catalysed reaction is O-phospho-L-tyrosyl-[protein] + H2O = L-tyrosyl-[protein] + phosphate. Secreted tyrosine phosphatase that plays a critical role during infection as a bacterial effector protein that counteracts host defenses. Required for intramacrophage survival. This Staphylococcus aureus (strain MRSA252) protein is Low molecular weight protein-tyrosine-phosphatase PtpA (ptpA).